The chain runs to 336 residues: Anthranilate phosphoribosyltransferase (336 aa).

Residues G79, 82-83, T87, 89-92, 107-115, and S119 each bind 5-phospho-alpha-D-ribose 1-diphosphate; these read GD, NIST, and KHGNRAMSS. G79 contributes to the anthranilate binding site. S91 lines the Mg(2+) pocket. N110 is a binding site for anthranilate. R165 is a binding site for anthranilate. Positions 225 and 226 each coordinate Mg(2+).

The protein belongs to the anthranilate phosphoribosyltransferase family. In terms of assembly, homodimer. Mg(2+) is required as a cofactor.

It catalyses the reaction N-(5-phospho-beta-D-ribosyl)anthranilate + diphosphate = 5-phospho-alpha-D-ribose 1-diphosphate + anthranilate. It participates in amino-acid biosynthesis; L-tryptophan biosynthesis; L-tryptophan from chorismate: step 2/5. Its function is as follows. Catalyzes the transfer of the phosphoribosyl group of 5-phosphorylribose-1-pyrophosphate (PRPP) to anthranilate to yield N-(5'-phosphoribosyl)-anthranilate (PRA). The protein is Anthranilate phosphoribosyltransferase of Dictyoglomus thermophilum (strain ATCC 35947 / DSM 3960 / H-6-12).